Consider the following 138-residue polypeptide: Thyrotropin subunit beta (138 aa).

A signal peptide spans 1–20; it reads MTAIFLMSMVFGLACGQTMS. 6 disulfide bridges follow: C22-C72, C36-C87, C39-C125, C47-C103, C51-C105, and C108-C115. N-linked (GlcNAc...) asparagine glycosylation is present at N43. The propeptide occupies 133 to 138; the sequence is VVEFSI.

Belongs to the glycoprotein hormones subunit beta family. As to quaternary structure, heterodimer of a common alpha chain and a unique beta chain which confers biological specificity to thyrotropin, lutropin, follitropin and gonadotropin.

It localises to the secreted. Its function is as follows. Indispensable for the control of thyroid structure and metabolism. This Equus caballus (Horse) protein is Thyrotropin subunit beta (TSHB).